Here is a 429-residue protein sequence, read N- to C-terminus: Argininosuccinate lyase (429 aa).

The protein belongs to the lyase 1 family. Argininosuccinate lyase subfamily.

The protein resides in the cytoplasm. It carries out the reaction 2-(N(omega)-L-arginino)succinate = fumarate + L-arginine. It participates in amino-acid biosynthesis; L-arginine biosynthesis; L-arginine from L-ornithine and carbamoyl phosphate: step 3/3. This chain is Argininosuccinate lyase, found in Pyrobaculum arsenaticum (strain DSM 13514 / JCM 11321 / PZ6).